Consider the following 622-residue polypeptide: DNA mismatch repair protein MutL (622 aa).

The protein belongs to the DNA mismatch repair MutL/HexB family.

This protein is involved in the repair of mismatches in DNA. It is required for dam-dependent methyl-directed DNA mismatch repair. May act as a 'molecular matchmaker', a protein that promotes the formation of a stable complex between two or more DNA-binding proteins in an ATP-dependent manner without itself being part of a final effector complex. The sequence is that of DNA mismatch repair protein MutL from Clostridium acetobutylicum (strain ATCC 824 / DSM 792 / JCM 1419 / IAM 19013 / LMG 5710 / NBRC 13948 / NRRL B-527 / VKM B-1787 / 2291 / W).